Consider the following 483-residue polypeptide: Glutamyl-tRNA(Gln) amidotransferase subunit A (483 aa).

Catalysis depends on charge relay system residues Lys76 and Ser151. Catalysis depends on Ser175, which acts as the Acyl-ester intermediate.

Belongs to the amidase family. GatA subfamily. Heterotrimer of A, B and C subunits.

It catalyses the reaction L-glutamyl-tRNA(Gln) + L-glutamine + ATP + H2O = L-glutaminyl-tRNA(Gln) + L-glutamate + ADP + phosphate + H(+). In terms of biological role, allows the formation of correctly charged Gln-tRNA(Gln) through the transamidation of misacylated Glu-tRNA(Gln) in organisms which lack glutaminyl-tRNA synthetase. The reaction takes place in the presence of glutamine and ATP through an activated gamma-phospho-Glu-tRNA(Gln). This Pseudomonas fluorescens (strain ATCC BAA-477 / NRRL B-23932 / Pf-5) protein is Glutamyl-tRNA(Gln) amidotransferase subunit A.